The following is a 245-amino-acid chain: Ribonuclease 3 (245 aa).

The 123-residue stretch at 24-146 (YTVFSQKLGY…IIGAIYLESG (123 aa)) folds into the RNase III domain. Residue Glu59 participates in Mg(2+) binding. Asp63 is a catalytic residue. Residues Asn132 and Glu135 each contribute to the Mg(2+) site. The active site involves Glu135. The region spanning 173–243 (DPKTLLQEYL…ARRAYKLAVV (71 aa)) is the DRBM domain.

This sequence belongs to the ribonuclease III family. Homodimer. Mg(2+) is required as a cofactor.

The protein localises to the cytoplasm. It carries out the reaction Endonucleolytic cleavage to 5'-phosphomonoester.. Functionally, digests double-stranded RNA. Involved in the processing of primary rRNA transcript to yield the immediate precursors to the large and small rRNAs (23S and 16S). Processes some mRNAs, and tRNAs when they are encoded in the rRNA operon. Processes pre-crRNA and tracrRNA of type II CRISPR loci if present in the organism. In Nitrosomonas eutropha (strain DSM 101675 / C91 / Nm57), this protein is Ribonuclease 3.